Consider the following 848-residue polypeptide: Translation initiation factor IF-2 (848 aa).

The disordered stretch occupies residues 1–20; that stretch reads MNESKGAVDSGLMSGKTERT. Residues 346–516 enclose the tr-type G domain; it reads PRAPVVTVMG…LLMAELLELK (171 aa). Residues 355-362 form a G1 region; it reads GHVDHGKT. Residue 355 to 362 coordinates GTP; sequence GHVDHGKT. The G2 stretch occupies residues 380–384; the sequence is GITQH. The G3 stretch occupies residues 402–405; that stretch reads DTPG. GTP contacts are provided by residues 402–406 and 456–459; these read DTPGH and NKID. Positions 456–459 are G4; the sequence is NKID. The interval 492 to 494 is G5; sequence SAK.

Belongs to the TRAFAC class translation factor GTPase superfamily. Classic translation factor GTPase family. IF-2 subfamily.

The protein localises to the cytoplasm. Functionally, one of the essential components for the initiation of protein synthesis. Protects formylmethionyl-tRNA from spontaneous hydrolysis and promotes its binding to the 30S ribosomal subunits. Also involved in the hydrolysis of GTP during the formation of the 70S ribosomal complex. This chain is Translation initiation factor IF-2, found in Ehrlichia canis (strain Jake).